The following is a 431-amino-acid chain: Glutamate--tRNA ligase 1 (431 aa).

The 'HIGH' region motif lies at 6 to 16 (PSPTGDMHIGN). Positions 235–239 (KMSKR) match the 'KMSKS' region motif. Residue Lys-238 coordinates ATP.

Belongs to the class-I aminoacyl-tRNA synthetase family. Glutamate--tRNA ligase type 1 subfamily. Monomer.

It is found in the cytoplasm. The enzyme catalyses tRNA(Glu) + L-glutamate + ATP = L-glutamyl-tRNA(Glu) + AMP + diphosphate. Its function is as follows. Catalyzes the attachment of glutamate to tRNA(Glu) in a two-step reaction: glutamate is first activated by ATP to form Glu-AMP and then transferred to the acceptor end of tRNA(Glu). The sequence is that of Glutamate--tRNA ligase 1 from Campylobacter jejuni subsp. jejuni serotype O:23/36 (strain 81-176).